We begin with the raw amino-acid sequence, 202 residues long: ATP-dependent Clp protease proteolytic subunit (202 aa).

Serine 101 serves as the catalytic Nucleophile. Histidine 126 is a catalytic residue.

Belongs to the peptidase S14 family. In terms of assembly, component of the chloroplastic Clp protease core complex.

The protein localises to the plastid. It is found in the chloroplast stroma. The enzyme catalyses Hydrolysis of proteins to small peptides in the presence of ATP and magnesium. alpha-casein is the usual test substrate. In the absence of ATP, only oligopeptides shorter than five residues are hydrolyzed (such as succinyl-Leu-Tyr-|-NHMec, and Leu-Tyr-Leu-|-Tyr-Trp, in which cleavage of the -Tyr-|-Leu- and -Tyr-|-Trp bonds also occurs).. Cleaves peptides in various proteins in a process that requires ATP hydrolysis. Has a chymotrypsin-like activity. Plays a major role in the degradation of misfolded proteins. In Acorus gramineus (Dwarf sweet flag), this protein is ATP-dependent Clp protease proteolytic subunit.